A 2153-amino-acid polypeptide reads, in one-letter code: RNA-directed RNA polymerase L (2153 aa).

Residues H36, E54, D97, E110, and V111 each contribute to the Mn(2+) site. Residue K124 is the For endonuclease activity of the active site. The RdRp catalytic domain maps to 957–1143 (TGKKIRFKRK…AVNQEMWKSM (187 aa)). D1100 lines the Mg(2+) pocket.

The protein belongs to the Bunyavirales RNA polymerase family. As to quaternary structure, interacts with the viral nucleoprotein. Mn(2+) is required as a cofactor. Mg(2+) serves as cofactor.

It localises to the host cytoplasm. Its subcellular location is the host perinuclear region. It carries out the reaction RNA(n) + a ribonucleoside 5'-triphosphate = RNA(n+1) + diphosphate. Functionally, RNA-dependent RNA polymerase, which is responsible for the replication and transcription of the viral RNA genome using antigenomic RNA as an intermediate. During transcription, synthesizes subgenomic RNAs and assures their capping by a cap-snatching mechanism, which involves the endonuclease activity cleaving the host capped pre-mRNAs. These short capped RNAs are then used as primers for viral transcription. Cleaves ssRNA substrates but not DNA. Seems to downregulate the expression of its own and heterologous mRNAs through its endonuclease activity. The sequence is that of RNA-directed RNA polymerase L from Black Creek Canal orthohantavirus (BCCV).